Here is a 172-residue protein sequence, read N- to C-terminus: Stellate orphon protein at 12D (172 aa).

The protein belongs to the casein kinase 2 subunit beta family. Interacts in vitro with the casein kinase 2 alpha subunit (CkII-alpha). The relevance of such interaction is however unclear in vivo. In terms of tissue distribution, probably not expressed in wild-type flies. In males lacking the Y chromosome, it is testis-specific and constitutes the main component of star-shaped crystals.

Unknown. In males lacking the Y chromosome, its strong overexpression leads to the appearance of proteinaceous star-shaped crystals in the primary spermatocytes causing meiotic drive, possibly by interfering with normal casein kinase 2 activity. The chain is Stellate orphon protein at 12D (Ste12DOR) from Drosophila melanogaster (Fruit fly).